The primary structure comprises 83 residues: Protein YqgD (83 aa).

It belongs to the YqgD family.

This chain is Protein YqgD (yqgD), found in Escherichia coli (strain K12).